A 97-amino-acid chain; its full sequence is Co-chaperonin GroES (97 aa).

Belongs to the GroES chaperonin family. In terms of assembly, heptamer of 7 subunits arranged in a ring. Interacts with the chaperonin GroEL.

It is found in the cytoplasm. In terms of biological role, together with the chaperonin GroEL, plays an essential role in assisting protein folding. The GroEL-GroES system forms a nano-cage that allows encapsulation of the non-native substrate proteins and provides a physical environment optimized to promote and accelerate protein folding. GroES binds to the apical surface of the GroEL ring, thereby capping the opening of the GroEL channel. This is Co-chaperonin GroES from Azotobacter vinelandii (strain DJ / ATCC BAA-1303).